Consider the following 314-residue polypeptide: Putative S-adenosyl-L-methionine-dependent methyltransferase MAP_0256 (314 aa).

S-adenosyl-L-methionine contacts are provided by residues Asp132 and 161–162 (DL).

It belongs to the UPF0677 family.

Its function is as follows. Exhibits S-adenosyl-L-methionine-dependent methyltransferase activity. The sequence is that of Putative S-adenosyl-L-methionine-dependent methyltransferase MAP_0256 from Mycolicibacterium paratuberculosis (strain ATCC BAA-968 / K-10) (Mycobacterium paratuberculosis).